An 86-amino-acid chain; its full sequence is Small ribosomal subunit protein bS20 (86 aa).

A compositionally biased stretch (basic residues) spans 1–11 (MANIKSQKKRV). A disordered region spans residues 1 to 20 (MANIKSQKKRVRTNEKAHQR).

Belongs to the bacterial ribosomal protein bS20 family.

Its function is as follows. Binds directly to 16S ribosomal RNA. The protein is Small ribosomal subunit protein bS20 of Bifidobacterium animalis subsp. lactis (strain AD011).